The following is a 185-amino-acid chain: Elongation factor P (185 aa).

It belongs to the elongation factor P family.

The protein resides in the cytoplasm. It participates in protein biosynthesis; polypeptide chain elongation. In terms of biological role, involved in peptide bond synthesis. Stimulates efficient translation and peptide-bond synthesis on native or reconstituted 70S ribosomes in vitro. Probably functions indirectly by altering the affinity of the ribosome for aminoacyl-tRNA, thus increasing their reactivity as acceptors for peptidyl transferase. This chain is Elongation factor P, found in Bacillus cereus (strain 03BB102).